The chain runs to 179 residues: Shikimate kinase (179 aa).

An ATP-binding site is contributed by 12–17 (GVGKSK). S16 provides a ligand contact to Mg(2+). Positions 34, 61, and 83 each coordinate substrate. R131 is an ATP binding site. Substrate is bound at residue R147.

It belongs to the shikimate kinase family. Monomer. Mg(2+) serves as cofactor.

The protein resides in the cytoplasm. The enzyme catalyses shikimate + ATP = 3-phosphoshikimate + ADP + H(+). Its pathway is metabolic intermediate biosynthesis; chorismate biosynthesis; chorismate from D-erythrose 4-phosphate and phosphoenolpyruvate: step 5/7. Its function is as follows. Catalyzes the specific phosphorylation of the 3-hydroxyl group of shikimic acid using ATP as a cosubstrate. In Leptospira borgpetersenii serovar Hardjo-bovis (strain JB197), this protein is Shikimate kinase.